Here is a 92-residue protein sequence, read N- to C-terminus: Small ribosomal subunit protein uS19 (92 aa).

This sequence belongs to the universal ribosomal protein uS19 family.

Its function is as follows. Protein S19 forms a complex with S13 that binds strongly to the 16S ribosomal RNA. The protein is Small ribosomal subunit protein uS19 of Streptococcus agalactiae serotype Ia (strain ATCC 27591 / A909 / CDC SS700).